The chain runs to 260 residues: Type III pantothenate kinase (260 aa).

6 to 13 contacts ATP; sequence DSGNTNIV. 108–111 contacts substrate; that stretch reads GADR. D110 acts as the Proton acceptor in catalysis. D130 serves as a coordination point for K(+). T133 is an ATP binding site. T185 provides a ligand contact to substrate.

It belongs to the type III pantothenate kinase family. In terms of assembly, homodimer. It depends on NH4(+) as a cofactor. Requires K(+) as cofactor.

It localises to the cytoplasm. The enzyme catalyses (R)-pantothenate + ATP = (R)-4'-phosphopantothenate + ADP + H(+). Its pathway is cofactor biosynthesis; coenzyme A biosynthesis; CoA from (R)-pantothenate: step 1/5. Functionally, catalyzes the phosphorylation of pantothenate (Pan), the first step in CoA biosynthesis. The sequence is that of Type III pantothenate kinase from Paramagnetospirillum magneticum (strain ATCC 700264 / AMB-1) (Magnetospirillum magneticum).